The sequence spans 201 residues: 3-isopropylmalate dehydratase small subunit (201 aa).

The protein belongs to the LeuD family. LeuD type 1 subfamily. In terms of assembly, heterodimer of LeuC and LeuD.

It catalyses the reaction (2R,3S)-3-isopropylmalate = (2S)-2-isopropylmalate. It participates in amino-acid biosynthesis; L-leucine biosynthesis; L-leucine from 3-methyl-2-oxobutanoate: step 2/4. Functionally, catalyzes the isomerization between 2-isopropylmalate and 3-isopropylmalate, via the formation of 2-isopropylmaleate. In Azorhizobium caulinodans (strain ATCC 43989 / DSM 5975 / JCM 20966 / LMG 6465 / NBRC 14845 / NCIMB 13405 / ORS 571), this protein is 3-isopropylmalate dehydratase small subunit.